The primary structure comprises 345 residues: UDP-N-acetylenolpyruvoylglucosamine reductase (345 aa).

Positions 59 to 254 (VGGPAACLAR…RKATQPLGRP (196 aa)) constitute an FAD-binding PCMH-type domain. Residue Arg-209 is part of the active site. Residue Cys-258 is the Proton donor of the active site. Glu-328 is a catalytic residue.

The protein belongs to the MurB family. The cofactor is FAD.

Its subcellular location is the cytoplasm. The catalysed reaction is UDP-N-acetyl-alpha-D-muramate + NADP(+) = UDP-N-acetyl-3-O-(1-carboxyvinyl)-alpha-D-glucosamine + NADPH + H(+). The protein operates within cell wall biogenesis; peptidoglycan biosynthesis. Its function is as follows. Cell wall formation. The chain is UDP-N-acetylenolpyruvoylglucosamine reductase from Syntrophobacter fumaroxidans (strain DSM 10017 / MPOB).